The chain runs to 204 residues: Probable calcium-binding protein CML46 (204 aa).

EF-hand domains follow at residues 72–106, 132–167, and 170–204; these read LEFQTSIKHEEYRDDDDDGLCREDVGMVMKSLGLS, PSLEEVKQAFDVFDENRDGFIDPIDLQRVLTILGLK, and SNLENCRRMIRSFDGSKDGRIDFYGFVKFMENNFC. The Ca(2+) site is built by Asp-145, Asn-147, Asp-149, and Asp-156.

Its function is as follows. Potential calcium sensor. This Arabidopsis thaliana (Mouse-ear cress) protein is Probable calcium-binding protein CML46.